We begin with the raw amino-acid sequence, 414 residues long: uncharacterized protein (414 aa).

It belongs to the MG032/MG096/MG288 family.

This is an uncharacterized protein from Mycoplasma genitalium (strain ATCC 33530 / DSM 19775 / NCTC 10195 / G37) (Mycoplasmoides genitalium).